A 219-amino-acid chain; its full sequence is Transmembrane protein 179B (219 aa).

Transmembrane regions (helical) follow at residues 6–26, 69–89, 105–125, and 167–187; these read PLLL…ITAA, ISVC…YIAF, LGLS…LKIG, and AETA…LVLI. The tract at residues 195–219 is disordered; sequence IRPGTEDPSAPPSETEPFFNRPGRP.

It belongs to the TMEM179 family.

The protein resides in the membrane. The polypeptide is Transmembrane protein 179B (tmem179b) (Danio rerio (Zebrafish)).